The primary structure comprises 478 residues: Protein nucleotidyltransferase YdiU (478 aa).

ATP contacts are provided by Gly-83, Gly-85, Arg-86, Lys-106, Asp-118, Gly-119, Arg-169, and Arg-176. Asp-245 acts as the Proton acceptor in catalysis. The Mg(2+) site is built by Asn-246 and Asp-255. Position 255 (Asp-255) interacts with ATP.

The protein belongs to the SELO family. Mg(2+) is required as a cofactor. It depends on Mn(2+) as a cofactor.

The enzyme catalyses L-seryl-[protein] + ATP = 3-O-(5'-adenylyl)-L-seryl-[protein] + diphosphate. The catalysed reaction is L-threonyl-[protein] + ATP = 3-O-(5'-adenylyl)-L-threonyl-[protein] + diphosphate. It carries out the reaction L-tyrosyl-[protein] + ATP = O-(5'-adenylyl)-L-tyrosyl-[protein] + diphosphate. It catalyses the reaction L-histidyl-[protein] + UTP = N(tele)-(5'-uridylyl)-L-histidyl-[protein] + diphosphate. The enzyme catalyses L-seryl-[protein] + UTP = O-(5'-uridylyl)-L-seryl-[protein] + diphosphate. The catalysed reaction is L-tyrosyl-[protein] + UTP = O-(5'-uridylyl)-L-tyrosyl-[protein] + diphosphate. In terms of biological role, nucleotidyltransferase involved in the post-translational modification of proteins. It can catalyze the addition of adenosine monophosphate (AMP) or uridine monophosphate (UMP) to a protein, resulting in modifications known as AMPylation and UMPylation. In Exiguobacterium sp. (strain ATCC BAA-1283 / AT1b), this protein is Protein nucleotidyltransferase YdiU.